A 417-amino-acid polypeptide reads, in one-letter code: Serine hydroxymethyltransferase (417 aa).

Residues leucine 121 and 125 to 127 (GHL) each bind (6S)-5,6,7,8-tetrahydrofolate. Lysine 229 is subject to N6-(pyridoxal phosphate)lysine. 355–357 (SPF) contacts (6S)-5,6,7,8-tetrahydrofolate.

The protein belongs to the SHMT family. As to quaternary structure, homodimer. The cofactor is pyridoxal 5'-phosphate.

Its subcellular location is the cytoplasm. It catalyses the reaction (6R)-5,10-methylene-5,6,7,8-tetrahydrofolate + glycine + H2O = (6S)-5,6,7,8-tetrahydrofolate + L-serine. Its pathway is one-carbon metabolism; tetrahydrofolate interconversion. The protein operates within amino-acid biosynthesis; glycine biosynthesis; glycine from L-serine: step 1/1. Catalyzes the reversible interconversion of serine and glycine with tetrahydrofolate (THF) serving as the one-carbon carrier. This reaction serves as the major source of one-carbon groups required for the biosynthesis of purines, thymidylate, methionine, and other important biomolecules. Also exhibits THF-independent aldolase activity toward beta-hydroxyamino acids, producing glycine and aldehydes, via a retro-aldol mechanism. The chain is Serine hydroxymethyltransferase from Buchnera aphidicola subsp. Acyrthosiphon pisum (strain APS) (Acyrthosiphon pisum symbiotic bacterium).